Consider the following 489-residue polypeptide: MIKNGPYLALDTSYQKLSVDELLETAGKRLPEHFDDYRQQLCRGEYRNISEDRPVTHVLSRSVHAVAKQSNRKTRFVDTVQKLRSGRRLGSTGKPITDVVNIGVGGSDLGPQMGAFALREFANDAALHNLQVHFVSSMDGGQLYAVLPIVDPETTLFIISSKSFGTVDTFANVDTVRKWIEPELTQEQWLENHVIGVSANAQGMTDYGIPPAQQFTFGDGVGGRFSLWSALGLSIALTTGIRPFERMLEGAKAMDEHFLDAPLNENLPVLLALYGVYNREQLGINNLAILPYDGRLRMLPNYLQQLDMESNGKQYTAENEAIDYPTGPIIWGGFGPNGQHAFFQHLHQGYDQFTADFVTVLKREAPGFSDATRSGLAEQQRLAVANCLAHRRLMSDGSENADSPSDHYPGGHPSNLLIMDELTPESFGALIAAYEHKVFTQGVIWGLNSFDQPGVEKGKKIAMDVLRVLDGESDESFDESTDAVIQRMR.

Glutamate 309 (proton donor) is an active-site residue. Catalysis depends on residues histidine 340 and lysine 459.

This sequence belongs to the GPI family.

It localises to the cytoplasm. The enzyme catalyses alpha-D-glucose 6-phosphate = beta-D-fructose 6-phosphate. The protein operates within carbohydrate biosynthesis; gluconeogenesis. Its pathway is carbohydrate degradation; glycolysis; D-glyceraldehyde 3-phosphate and glycerone phosphate from D-glucose: step 2/4. Catalyzes the reversible isomerization of glucose-6-phosphate to fructose-6-phosphate. This chain is Glucose-6-phosphate isomerase, found in Idiomarina loihiensis (strain ATCC BAA-735 / DSM 15497 / L2-TR).